Consider the following 314-residue polypeptide: MFSHITVLKEESVNGLAVKPGGVYVDCTLGGGGHSERILTALAGEGHLYAFDQDEAALSFAAEKLSRFKENITFIRSNFRHIKEELRMRGVDKVDGILFDLGVSSPQLDEASRGFSYHQDAPLDMRMDQSASLTAREVVNTWPFAKLHSIISRYGEEKFSKQIARKIEAYRLKQPIETTGELVDIIKEAIPAPARRAGGHPAKRTFQAIRIAVNDELGAFEDALTDGFELLNEGGRMAVITFHSLEDRLCKQMFKEKTKLPDLPKGLPIIPADQKAPFALITKKPIVANDEEIKANNRARSAKLRIIEKEKQTD.

Residues 32-34 (GGH), aspartate 52, phenylalanine 79, aspartate 100, and glutamine 107 contribute to the S-adenosyl-L-methionine site.

Belongs to the methyltransferase superfamily. RsmH family.

It is found in the cytoplasm. The catalysed reaction is cytidine(1402) in 16S rRNA + S-adenosyl-L-methionine = N(4)-methylcytidine(1402) in 16S rRNA + S-adenosyl-L-homocysteine + H(+). In terms of biological role, specifically methylates the N4 position of cytidine in position 1402 (C1402) of 16S rRNA. The sequence is that of Ribosomal RNA small subunit methyltransferase H from Shouchella clausii (strain KSM-K16) (Alkalihalobacillus clausii).